The following is a 1956-amino-acid chain: Sodium channel protein type 10 subunit alpha (1956 aa).

The Cytoplasmic portion of the chain corresponds to 1 to 125 (MELPFASVGT…FNLIRRTAIK (125 aa)). Residues 31–54 (HRAAKKARTKHRGQEDKGEKPRPQ) are disordered. The span at 32 to 41 (RAAKKARTKH) shows a compositional bias: basic residues. A compositionally biased stretch (basic and acidic residues) spans 42–54 (RGQEDKGEKPRPQ). The stretch at 116–404 (FNLIRRTAIK…VTMAYEEQSQ (289 aa)) is one I repeat. Residues 126 to 149 (VSVHSWFSIFITITILVNCVCMTR) traverse the membrane as a helical segment. At 150–154 (TDLPE) the chain is on the extracellular side. Residues 155–174 (KVEYVFTVIYTFEALIKILA) form a helical membrane-spanning segment. At 175-187 (RGFCLNEFTYLRD) the chain is on the cytoplasmic side. Residues 188–206 (PWNWLDFSVITLAYVGAAI) form a helical membrane-spanning segment. Topologically, residues 207–212 (DLRGIS) are extracellular. The chain crosses the membrane as a helical; Voltage-sensor span at residues 213–232 (GLRTFRVLRALKTVSVIPGL). Topologically, residues 233–248 (KVIVGALIHSVRKLAD) are cytoplasmic. The helical transmembrane segment at 249-272 (VTILTVFCLSVFALVGLQLFKGNL) threads the bilayer. The Extracellular segment spans residues 273–340 (KNKCIRNGTD…PDFNYTSFDS (68 aa)). Cysteines 276 and 318 form a disulfide. Residues asparagine 279, asparagine 288, asparagine 311, and asparagine 334 are each glycosylated (N-linked (GlcNAc...) asparagine). Positions 341-365 (FAWAFLSLFRLMTQDSWERLYQQTL) form an intramembrane region, pore-forming. Residues 366-372 (RASGKMY) are Extracellular-facing. A helical membrane pass occupies residues 373–398 (MVFFVLVIFLGSFYLVNLILAVVTMA). The Cytoplasmic segment spans residues 399–658 (YEEQSQATIA…KWRKFKMALF (260 aa)). A phosphoserine mark is found at serine 440, serine 443, serine 466, and serine 478. The span at 441–453 (LQSHSGSPLASKN) shows a compositional bias: polar residues. 2 disordered regions span residues 441-484 (LQSH…YNQR) and 537-581 (LLGR…AGAP). Residues 475-484 (SPQSDPYNQR) are compositionally biased toward polar residues. A phosphoserine mark is found at serine 611 and serine 614. Residues 646–910 (CCPKWRKFKM…EDDGEVNNLQ (265 aa)) form an II repeat. Residues 659 to 683 (ELVTDPFAELTITLCIVVNTVFMAM) traverse the membrane as a helical segment. The Extracellular portion of the chain corresponds to 684 to 694 (EHYPMTDAFDA). Residues 695-718 (MLQAGNIVFTVFFTMEMAFKIIAF) form a helical membrane-spanning segment. At 719 to 726 (DPYYYFQK) the chain is on the cytoplasmic side. A helical membrane pass occupies residues 727 to 746 (KWNIFDCVIVTVSLLELSAS). Over 747 to 752 (KKGSLS) the chain is Extracellular. Residues 753-772 (VLRTFRLLRVFKLAKSWPTL) form a helical; Voltage-sensor membrane-spanning segment. The Cytoplasmic segment spans residues 773–788 (NTLIKIIGNSVGALGN). Residues 789 to 809 (LTFILAIIVFIFALVGKQLLS) traverse the membrane as a helical segment. Residues 810-833 (EDYGCRKDGVSVWNGEKLRWHMCD) lie on the Extracellular side of the membrane. Residues 834–854 (FFHSFLVVFRILCGEWIENMW) constitute an intramembrane region (pore-forming). Over 855–863 (VCMEVSQKS) the chain is Extracellular. Cysteines 856 and 865 form a disulfide. Residues 864–889 (ICLILFLTVMVLGNLVVLNLFIALLL) traverse the membrane as a helical segment. The Cytoplasmic portion of the chain corresponds to 890–1148 (NSFSADNLTA…GWQVRKTCYR (259 aa)). The disordered stretch occupies residues 1008–1094 (DELEEDMEQA…SEGSTVDCPD (87 aa)). The III repeat unit spans residues 1141–1450 (QVRKTCYRIV…KKYYNAMKKL (310 aa)). A helical transmembrane segment spans residues 1149–1172 (IVEHSWFESFIIFMILLSSGALAF). Residues 1173–1185 (EDNYLEEKPRVKS) lie on the Extracellular side of the membrane. Residues 1186-1211 (VLEYTDRVFTFIFVFEMLLKWVAYGF) traverse the membrane as a helical segment. Residues 1212–1217 (KKYFTN) are Cytoplasmic-facing. A helical membrane pass occupies residues 1218-1239 (AWCWLDFLIVNISLTSLIAKIL). Residues 1240 to 1243 (EYSD) lie on the Extracellular side of the membrane. Residues 1244–1265 (VASIKALRTLRALRPLRALSRF) form a helical; Voltage-sensor membrane-spanning segment. Over 1266–1284 (EGMRVVVDALVGAIPSIMN) the chain is Cytoplasmic. Residues 1285–1312 (VLLVCLIFWLIFSIMGVNLFAGKFSKCV) traverse the membrane as a helical segment. Residues 1313–1354 (DTRNNPFSNVNSTMVNNKSECHNQNSTGHFFWVNVKVNFDNV) are Extracellular-facing. Residues asparagine 1323, asparagine 1329, and asparagine 1337 are each glycosylated (N-linked (GlcNAc...) asparagine). An intramembrane region (pore-forming) is located at residues 1355-1376 (AMGYLALLQVATFKGWMDIMYA). Topologically, residues 1377-1392 (AVDSGEINSQPNWENN) are extracellular. Residues 1393–1419 (LYMYLYFVVFIIFGGFFTLNLFVGVII) traverse the membrane as a helical segment. Residues 1420–1472 (DNFNQQKKKLGGQDIFMTEEQKKYYNAMKKLGSKKPQKPIPRPLNKYQGFVFD) are Cytoplasmic-facing. The residue at position 1452 (serine 1452) is a Phosphoserine; by PKC. One copy of the IV repeat lies at 1459–1758 (IPRPLNKYQG…WEKFDPEATQ (300 aa)). A helical membrane pass occupies residues 1473 to 1496 (IVTRQAFDIIIMVLICLNMITMMV). The Extracellular portion of the chain corresponds to 1497–1507 (ETDEQGEEKTK). The chain crosses the membrane as a helical span at residues 1508-1531 (VLGRINQFFVAVFTGECVMKMFAL). Residues 1532–1537 (RQYYFT) are Cytoplasmic-facing. The helical transmembrane segment at 1538-1561 (NGWNVFDFIVVILSIGSLLFSAIL) threads the bilayer. At 1562-1573 (KSLENYFSPTLF) the chain is on the extracellular side. Residues 1574–1595 (RVIRLARIGRILRLIRAAKGIR) form a helical; Voltage-sensor membrane-spanning segment. Over 1596-1610 (TLLFALMMSLPALFN) the chain is Cytoplasmic. A helical transmembrane segment spans residues 1611-1633 (IGLLLFLVMFIYSIFGMASFANV). The Extracellular segment spans residues 1634–1647 (VDEAGIDDMFNFKT). The pore-forming intramembrane region spans 1648 to 1670 (FGNSMLCLFQITTSAGWDGLLSP). Over 1671-1698 (ILNTGPPYCDPNLPNSNGSRGNCGSPAV) the chain is Extracellular. The N-linked (GlcNAc...) asparagine glycan is linked to asparagine 1687. A helical membrane pass occupies residues 1699–1723 (GIIFFTTYIIISFLIVVNMYIAVIL). The Cytoplasmic portion of the chain corresponds to 1724-1956 (ENFNVATEES…AKEGNSPGPQ (233 aa)). Residues 1852–1881 (EDLSATVIQKAYRSYMLHRSLTLSNTLHVP) form the IQ domain. Positions 1906–1956 (DKSETASATSFPPSYDSVTRGLSDRANINPSSSMQNEDEVAAKEGNSPGPQ) are disordered. Positions 1931 to 1940 (ANINPSSSMQ) are enriched in polar residues.

It belongs to the sodium channel (TC 1.A.1.10) family. Nav1.8/SCN10A subfamily. In terms of assembly, the channel consists of an ion conducting pore forming alpha-subunit regulated by one or more associated auxiliary subunits SCN1B, SCN2B and SCN3B; electrophysiological properties may vary depending on the type of the associated beta subunits. Found in a number of complexes with PRX, DYNLT1 and PDZD2. Interacts with proteins such as FSTL1, PRX, DYNLT1, PDZD2, S100A10 and many others. Interacts with NEDD4 and NEDD4L. Post-translationally, ubiquitinated by NEDD4L; which promotes its endocytosis. Phosphorylation at Ser-1452 by PKC in a highly conserved cytoplasmic loop slows inactivation of the sodium channel and reduces peak sodium currents. In terms of processing, lacks the cysteine which covalently binds the conotoxin GVIIJ. This cysteine (position 815) is speculated in other sodium channel subunits alpha to be implied in covalent binding with the sodium channel subunit beta-2 or beta-4. As to expression, expressed in dorsal root ganglia, trigeminal ganglia, nodose ganglia and sciatic nerve.

It is found in the cell membrane. It carries out the reaction Na(+)(in) = Na(+)(out). Tetrodotoxin-resistant channel that mediates the voltage-dependent sodium ion permeability of excitable membranes. Assuming opened or closed conformations in response to the voltage difference across the membrane, the protein forms a sodium-selective channel through which sodium ions may pass in accordance with their electrochemical gradient. Plays a role in neuropathic pain mechanisms. The protein is Sodium channel protein type 10 subunit alpha of Rattus norvegicus (Rat).